Reading from the N-terminus, the 426-residue chain is Histone-binding protein RBBP7 (426 aa).

WD repeat units follow at residues 47–123 (QWLP…KINH), 129–174 (RARY…LRLR), 182–218 (GLSW…KIVD), 229–270 (VVED…HSVD), 276–313 (VNCL…LHSF), 319–370 (EIFQ…LFIH), and 377–404 (ISDF…VWQM).

This sequence belongs to the WD repeat RBAP46/RBAP48/MSI1 family. As to quaternary structure, binds directly to helix 1 of the histone fold of histone H4, a region that is not accessible when H4 is in chromatin.

It localises to the nucleus. Functionally, core histone-binding subunit that may target chromatin remodeling factors, histone acetyltransferases and histone deacetylases to their histone substrates in a manner that is regulated by nucleosomal DNA. Component of several complexes which regulate chromatin metabolism. The polypeptide is Histone-binding protein RBBP7 (rbbp7) (Danio rerio (Zebrafish)).